A 444-amino-acid chain; its full sequence is Cerebral cavernous malformations 2 protein (444 aa).

Residues 1–37 (MEEEGKKGKKPGIVSPFKRVFLKGEKSRDKKAHEKVT) are disordered. Residue serine 15 is modified to Phosphoserine. Residues 22–37 (LKGEKSRDKKAHEKVT) are compositionally biased toward basic and acidic residues. The PID domain occupies 59–248 (LSDYIEKEVK…TPTHHLSLHS (190 aa)). Phosphoserine is present on serine 164. The interval 283–376 (SKTISESELS…NFLETIGVKD (94 aa)) is harmonin homology domain. A phosphoserine mark is found at serine 384 and serine 393. The segment at 391–423 (ALSTTSSSTTNGNRATGSSDDRSAPSEGDEWDR) is disordered. Residues 392-408 (LSTTSSSTTNGNRATGS) are compositionally biased toward low complexity. Threonine 394 is modified (phosphothreonine). At serine 396 the chain carries Phosphoserine. Position 399 is a phosphothreonine (threonine 399).

It belongs to the CCM2 family. In terms of assembly, part of a complex with MAP2K3, MAP3K3 and RAC1. Binds RAC1 directly and independently of its nucleotide-bound state. Interacts with HEG1 and KRIT1; KRIT1 greatly facilitates the interaction with HEG1. Interacts with PDCD10.

The protein localises to the cytoplasm. Its function is as follows. Component of the CCM signaling pathway which is a crucial regulator of heart and vessel formation and integrity. May act through the stabilization of endothelial cell junctions. May function as a scaffold protein for MAP2K3-MAP3K3 signaling. Seems to play a major role in the modulation of MAP3K3-dependent p38 activation induced by hyperosmotic shock. The sequence is that of Cerebral cavernous malformations 2 protein (CCM2) from Homo sapiens (Human).